Reading from the N-terminus, the 522-residue chain is Acetylcholine receptor subunit delta (522 aa).

The N-terminal stretch at 1 to 21 is a signal peptide; sequence MGNIHFVYLLISCLYYSGCSG. At 22 to 245 the chain is on the extracellular side; sequence VNEEERLIND…VTFYLIIRRK (224 aa). Residues Asn-91, Asn-164, and Asn-229 are each glycosylated (N-linked (GlcNAc...) asparagine). Residues Cys-151 and Cys-165 are joined by a disulfide bond. A run of 3 helical transmembrane segments spans residues 246–270, 278–295, and 312–333; these read PLFY…AFYL, MSTA…LLLT, and YLMF…VLNF. Topologically, residues 334–476 are cytoplasmic; that stretch reads HFRTPSTHVL…WNLVGQTIDR (143 aa). A Phosphotyrosine; by Tyr-kinases modification is found at Tyr-393. The chain crosses the membrane as a helical span at residues 477–497; the sequence is LSMFIITPVMVLGTIFIFVMG.

Belongs to the ligand-gated ion channel (TC 1.A.9) family. Acetylcholine receptor (TC 1.A.9.1) subfamily. Pentamer of two alpha chains, and one each of the beta, delta, and gamma chains.

The protein resides in the postsynaptic cell membrane. Its subcellular location is the cell membrane. It catalyses the reaction K(+)(in) = K(+)(out). The enzyme catalyses Na(+)(in) = Na(+)(out). Functionally, after binding acetylcholine, the AChR responds by an extensive change in conformation that affects all subunits and leads to opening of an ion-conducting channel across the plasma membrane. This Tetronarce californica (Pacific electric ray) protein is Acetylcholine receptor subunit delta (chrnd).